Here is a 119-residue protein sequence, read N- to C-terminus: MIAGIGIDVAEIDRIKRAVEKTPSFINKVLTKGEQAQLATLKNQRYYEYIAGRFSLKEAYSKALGTGIGRHVSFLDVEIIDNELGQPVVVSHPFDGPAHASVSHTGQLVFTEVILEKGE.

The Mg(2+) site is built by aspartate 8 and glutamate 58.

It belongs to the P-Pant transferase superfamily. AcpS family. Mg(2+) serves as cofactor.

It localises to the cytoplasm. The enzyme catalyses apo-[ACP] + CoA = holo-[ACP] + adenosine 3',5'-bisphosphate + H(+). Functionally, transfers the 4'-phosphopantetheine moiety from coenzyme A to a Ser of acyl-carrier-protein. This chain is Holo-[acyl-carrier-protein] synthase, found in Limosilactobacillus fermentum (strain NBRC 3956 / LMG 18251) (Lactobacillus fermentum).